A 270-amino-acid polypeptide reads, in one-letter code: Putative pyruvate, phosphate dikinase regulatory protein 2 (270 aa).

151–158 is an ADP binding site; that stretch reads GVSRTSKT.

The protein belongs to the pyruvate, phosphate/water dikinase regulatory protein family. PDRP subfamily.

The enzyme catalyses N(tele)-phospho-L-histidyl/L-threonyl-[pyruvate, phosphate dikinase] + ADP = N(tele)-phospho-L-histidyl/O-phospho-L-threonyl-[pyruvate, phosphate dikinase] + AMP + H(+). The catalysed reaction is N(tele)-phospho-L-histidyl/O-phospho-L-threonyl-[pyruvate, phosphate dikinase] + phosphate + H(+) = N(tele)-phospho-L-histidyl/L-threonyl-[pyruvate, phosphate dikinase] + diphosphate. Its function is as follows. Bifunctional serine/threonine kinase and phosphorylase involved in the regulation of the pyruvate, phosphate dikinase (PPDK) by catalyzing its phosphorylation/dephosphorylation. This is Putative pyruvate, phosphate dikinase regulatory protein 2 from Listeria monocytogenes serotype 4b (strain F2365).